The primary structure comprises 393 residues: NAD(P)H-quinone oxidoreductase subunit H, chloroplastic (393 aa).

It belongs to the complex I 49 kDa subunit family. As to quaternary structure, NDH is composed of at least 16 different subunits, 5 of which are encoded in the nucleus.

It is found in the plastid. The protein localises to the chloroplast thylakoid membrane. It catalyses the reaction a plastoquinone + NADH + (n+1) H(+)(in) = a plastoquinol + NAD(+) + n H(+)(out). The enzyme catalyses a plastoquinone + NADPH + (n+1) H(+)(in) = a plastoquinol + NADP(+) + n H(+)(out). Its function is as follows. NDH shuttles electrons from NAD(P)H:plastoquinone, via FMN and iron-sulfur (Fe-S) centers, to quinones in the photosynthetic chain and possibly in a chloroplast respiratory chain. The immediate electron acceptor for the enzyme in this species is believed to be plastoquinone. Couples the redox reaction to proton translocation, and thus conserves the redox energy in a proton gradient. This Nicotiana sylvestris (Wood tobacco) protein is NAD(P)H-quinone oxidoreductase subunit H, chloroplastic.